Consider the following 339-residue polypeptide: Tetraacyldisaccharide 4'-kinase (339 aa).

62–69 serves as a coordination point for ATP; that stretch reads VAGGTGKT.

The protein belongs to the LpxK family.

It catalyses the reaction a lipid A disaccharide + ATP = a lipid IVA + ADP + H(+). Its pathway is glycolipid biosynthesis; lipid IV(A) biosynthesis; lipid IV(A) from (3R)-3-hydroxytetradecanoyl-[acyl-carrier-protein] and UDP-N-acetyl-alpha-D-glucosamine: step 6/6. Its function is as follows. Transfers the gamma-phosphate of ATP to the 4'-position of a tetraacyldisaccharide 1-phosphate intermediate (termed DS-1-P) to form tetraacyldisaccharide 1,4'-bis-phosphate (lipid IVA). The sequence is that of Tetraacyldisaccharide 4'-kinase from Xylella fastidiosa (strain M23).